We begin with the raw amino-acid sequence, 259 residues long: Glutathione S-transferase domain-containing protein DDB_G0274705 (259 aa).

Positions 7–96 constitute a GST N-terminal domain; it reads KIDYIFYTNN…YLAQKFNTFL (90 aa). Positions 102 to 232 constitute a GST C-terminal domain; sequence NPLENSEVIT…GFKNFNPSLL (131 aa).

This sequence belongs to the GST superfamily.

The polypeptide is Glutathione S-transferase domain-containing protein DDB_G0274705 (Dictyostelium discoideum (Social amoeba)).